The primary structure comprises 399 residues: Protein shisa-8 (399 aa).

The signal sequence occupies residues 1–36 (MERAGARGQRCGRRSHGLPLALRLALLLAGSPSGRA). The Extracellular portion of the chain corresponds to 37–136 (GAPEEQEIAG…APRDPARERS (100 aa)). An N-linked (GlcNAc...) asparagine glycan is attached at asparagine 73. The chain crosses the membrane as a helical span at residues 137 to 157 (HTAVYAVCGVAALLVLVGIGA). Residues 158-399 (RLGLERAHSP…STNSKAEVTV (242 aa)) lie on the Cytoplasmic side of the membrane. Disordered stretches follow at residues 207–248 (GDGV…GGSL) and 378–399 (FYSS…EVTV). Positions 389–399 (LSTNSKAEVTV) are enriched in polar residues.

It belongs to the shisa family. As to quaternary structure, interacts with AMPAR subunits GRIA1 and GRIA2. As to expression, brain-specific. Highly expressed in cerebellum and olfactory bulb.

The protein localises to the membrane. In terms of biological role, may regulate trafficking and current kinetics of AMPA-type glutamate receptor (AMPAR) at synapses. This is Protein shisa-8 from Mus musculus (Mouse).